A 252-amino-acid chain; its full sequence is Outer membrane protein P1 (252 aa).

The N-terminal stretch at 1–23 is a signal peptide; it reads METTTKLAIGVSALCCLASAAFA.

This sequence belongs to the Coxiella porin P1 (CPP1) (TC 1.B.43) family. May form trimers.

It localises to the cell outer membrane. Able to form a pore in lipid bilayers. This is Outer membrane protein P1 (ompP1) from Coxiella burnetii (strain RSA 493 / Nine Mile phase I).